Reading from the N-terminus, the 375-residue chain is Queuine tRNA-ribosyltransferase (375 aa).

Residue D89 is the Proton acceptor of the active site. Residues 89–93, D143, Q187, and G214 contribute to the substrate site; that span reads DSGGF. The segment at 245-251 is RNA binding; sequence GVGKPED. The Nucleophile role is filled by D264. Residues 269–273 form an RNA binding; important for wobble base 34 recognition region; the sequence is TRNAR. Residues C302, C304, C307, and H333 each contribute to the Zn(2+) site.

Belongs to the queuine tRNA-ribosyltransferase family. Homodimer. Within each dimer, one monomer is responsible for RNA recognition and catalysis, while the other monomer binds to the replacement base PreQ1. Zn(2+) serves as cofactor.

It catalyses the reaction 7-aminomethyl-7-carbaguanine + guanosine(34) in tRNA = 7-aminomethyl-7-carbaguanosine(34) in tRNA + guanine. The protein operates within tRNA modification; tRNA-queuosine biosynthesis. Catalyzes the base-exchange of a guanine (G) residue with the queuine precursor 7-aminomethyl-7-deazaguanine (PreQ1) at position 34 (anticodon wobble position) in tRNAs with GU(N) anticodons (tRNA-Asp, -Asn, -His and -Tyr). Catalysis occurs through a double-displacement mechanism. The nucleophile active site attacks the C1' of nucleotide 34 to detach the guanine base from the RNA, forming a covalent enzyme-RNA intermediate. The proton acceptor active site deprotonates the incoming PreQ1, allowing a nucleophilic attack on the C1' of the ribose to form the product. After dissociation, two additional enzymatic reactions on the tRNA convert PreQ1 to queuine (Q), resulting in the hypermodified nucleoside queuosine (7-(((4,5-cis-dihydroxy-2-cyclopenten-1-yl)amino)methyl)-7-deazaguanosine). This Salmonella choleraesuis (strain SC-B67) protein is Queuine tRNA-ribosyltransferase.